The following is a 618-amino-acid chain: Sulfite reductase [NADPH] flavoprotein alpha-component (618 aa).

Residues 64 to 202 (VTLISASQTG…QAQQWRQQVV (139 aa)) form the Flavodoxin-like domain. FMN is bound by residues 70-75 (SQTGNA), 117-120 (STQG), and 153-162 (LGDTSYEHFC). Residues 253–467 (TAPLTAQLSV…IEHNDNFRLP (215 aa)) enclose the FAD-binding FR-type domain. FAD contacts are provided by residues Thr-341, Lys-375, 405–408 (RLYS), 423–425 (TVG), Tyr-429, and 438–441 (GGAS). NADP(+)-binding positions include 538–539 (SR), 544–548 (KIYVQ), and Asp-580. Tyr-618 is an FAD binding site.

Belongs to the NADPH-dependent sulphite reductase flavoprotein subunit CysJ family. This sequence in the N-terminal section; belongs to the flavodoxin family. It in the C-terminal section; belongs to the flavoprotein pyridine nucleotide cytochrome reductase family. Alpha(8)-beta(8). The alpha component is a flavoprotein, the beta component is a hemoprotein. Requires FAD as cofactor. FMN is required as a cofactor.

The catalysed reaction is hydrogen sulfide + 3 NADP(+) + 3 H2O = sulfite + 3 NADPH + 4 H(+). The protein operates within sulfur metabolism; hydrogen sulfide biosynthesis; hydrogen sulfide from sulfite (NADPH route): step 1/1. In terms of biological role, component of the sulfite reductase complex that catalyzes the 6-electron reduction of sulfite to sulfide. This is one of several activities required for the biosynthesis of L-cysteine from sulfate. The flavoprotein component catalyzes the electron flow from NADPH -&gt; FAD -&gt; FMN to the hemoprotein component. This Yersinia pseudotuberculosis serotype I (strain IP32953) protein is Sulfite reductase [NADPH] flavoprotein alpha-component.